The primary structure comprises 385 residues: Mannitol-1-phosphate 5-dehydrogenase (385 aa).

3–14 is a binding site for NAD(+); it reads ALQFGAGNIGRG.

The protein belongs to the mannitol dehydrogenase family.

The catalysed reaction is D-mannitol 1-phosphate + NAD(+) = beta-D-fructose 6-phosphate + NADH + H(+). In Buchnera aphidicola subsp. Acyrthosiphon pisum (strain APS) (Acyrthosiphon pisum symbiotic bacterium), this protein is Mannitol-1-phosphate 5-dehydrogenase (mtlD).